Here is a 408-residue protein sequence, read N- to C-terminus: MSPCENDTPINWKRNLIVAWLGCFLTGAAFSLVMPFLPLYVEQLGVTGHSALNMWSGIVFSITFLFSAIASPFWGGLADRKGRKIMLLRSALGMGIVMVLMGLAQNIWQFLILRALLGLLGGFVPNANALIATQVPRNKSGWALGTLSTGGVSGALLGPMAGGLLADSYGLRPVFFITASVLILCFFVTLFCIREKFQPVSKKEMLHMREVVTSLKNPKLVLSLFVTTLIIQVATGSIAPILTLYVRELAGNVSNVAFISGMIASVPGVAALLSAPRLGKLGDRIGPEKILITALIFSVLLLIPMSYVQTPLQLGILRFLLGAADGALLPAVQTLLVYNSSNQIAGRIFSYNQSFRDIGNVTGPLMGAAISANYGFRAVFLVTAGVVLFNAVYSWNSLRRRRIPQISN.

11 consecutive transmembrane segments (helical) span residues 16-36 (LIVA…VMPF), 58-78 (IVFS…GGLA), 92-112 (LGMG…QFLI), 115-135 (ALLG…ATQV), 146-166 (TLST…GLLA), 173-193 (PVFF…LFCI), 224-244 (LFVT…ILTL), 256-276 (VAFI…LSAP), 290-310 (ILIT…YVQT), 319-339 (FLLG…LVYN), and 378-398 (AVFL…WNSL).

The protein belongs to the major facilitator superfamily. DHA1 family. MdtG (TC 2.A.1.2.20) subfamily.

Its subcellular location is the cell inner membrane. Its function is as follows. Confers resistance to fosfomycin and deoxycholate. This chain is Multidrug resistance protein MdtG, found in Escherichia coli O6:K15:H31 (strain 536 / UPEC).